Reading from the N-terminus, the 299-residue chain is Protoheme IX farnesyltransferase (299 aa).

Transmembrane regions (helical) follow at residues Val-24 to Met-44, Trp-46 to Ile-66, Val-94 to Gly-114, Leu-118 to Leu-138, Ile-146 to Gly-166, Ala-172 to Val-192, Leu-232 to Val-252, and Ile-278 to Leu-298.

Belongs to the UbiA prenyltransferase family. Protoheme IX farnesyltransferase subfamily.

The protein resides in the cell inner membrane. The catalysed reaction is heme b + (2E,6E)-farnesyl diphosphate + H2O = Fe(II)-heme o + diphosphate. It functions in the pathway porphyrin-containing compound metabolism; heme O biosynthesis; heme O from protoheme: step 1/1. In terms of biological role, converts heme B (protoheme IX) to heme O by substitution of the vinyl group on carbon 2 of heme B porphyrin ring with a hydroxyethyl farnesyl side group. This chain is Protoheme IX farnesyltransferase, found in Hahella chejuensis (strain KCTC 2396).